Reading from the N-terminus, the 217-residue chain is tRNA (guanine-N(7)-)-methyltransferase (217 aa).

Positions 46, 71, 98, and 120 each coordinate S-adenosyl-L-methionine. Aspartate 120 is a catalytic residue. A substrate-binding site is contributed by lysine 124. An interaction with RNA region spans residues 126–131 (RHEKRR). Substrate is bound by residues aspartate 156 and 196–199 (TEYE).

It belongs to the class I-like SAM-binding methyltransferase superfamily. TrmB family.

It catalyses the reaction guanosine(46) in tRNA + S-adenosyl-L-methionine = N(7)-methylguanosine(46) in tRNA + S-adenosyl-L-homocysteine. It functions in the pathway tRNA modification; N(7)-methylguanine-tRNA biosynthesis. Functionally, catalyzes the formation of N(7)-methylguanine at position 46 (m7G46) in tRNA. The chain is tRNA (guanine-N(7)-)-methyltransferase from Lactobacillus gasseri (strain ATCC 33323 / DSM 20243 / BCRC 14619 / CIP 102991 / JCM 1131 / KCTC 3163 / NCIMB 11718 / NCTC 13722 / AM63).